The sequence spans 208 residues: MTNVQRSRRQVRLSRALGIALTPKAQRIFEKRPYAPGEHGRTRRRTESDYAVRLREKQRLRAQYGISEKQLRAAYEKGTHTAGQTGNAMLTDLETRLDALVLRAGFARTTAQARQFVVHRHILVDGNIVDRPSYRVKPGQTIQVKAKSQTMVPFQAAAEGVHRDVLPAVPGYLDVNLPSLKATLTRKPEAEEIPVQVNIQYVVEFYAR.

Residues 95-155 enclose the S4 RNA-binding domain; it reads TRLDALVLRA…AKSQTMVPFQ (61 aa).

Belongs to the universal ribosomal protein uS4 family. Part of the 30S ribosomal subunit. Contacts protein S5. The interaction surface between S4 and S5 is involved in control of translational fidelity.

Functionally, one of the primary rRNA binding proteins, it binds directly to 16S rRNA where it nucleates assembly of the body of the 30S subunit. In terms of biological role, with S5 and S12 plays an important role in translational accuracy. The protein is Small ribosomal subunit protein uS4 of Bifidobacterium adolescentis (strain ATCC 15703 / DSM 20083 / NCTC 11814 / E194a).